Consider the following 755-residue polypeptide: MADDGLLLNFSLGDSNVIKAEPKLKGGTWRDRLSARKIAQHRSKGPRKPGDENTAPRVPRNPNQIEVSATRPQKRQRTDGGDGGRPQSHAQSNQPRQFISSLFTKNPEPKNVEEVKEEGPVEEAKPTNAPLIDGLDTFTNLGLSPSLAAHLLTKLELKAPTAIQKASISQLLKEDGDAFIQAETGSGKTLAYLLPLVQRIMTLSKPTTDATGQPIVHRDSGLFAIVLAPTRELCKQISVVLESLLRCAHWIVAGTVIGGEKKKSEKARLRKGLNILVATPGRLADHLENTKVLDVSNVRWLVLDEGDRLMELGFEEEIQGIVKKLDARQRPSRIPGIPTKRTTVLCSATMKMNVQKLGEISLKDAVHIKADPEDEDEKARLANKEEDSAYRVPAQLKQSYAVVAAKLRLVTLTAYLKRTFMRKGSVMKTIVFVSCADSVDFHFEVFTRKKQQTDDADASDEEKTEEKPLSPHGTIAPATAFSNPSNPVTLYRLHGSLPQNVRTSTLASFAKNREPSVLICTDVASRGLDLPNVDLVVEYDPAFSAEDHLHRIGRTARVGRDGRALVFLMPGCEENYVEILKRGYRDGGKALTRVDANDILKRGFGGNVEAGKKDWDVKATDWQCEVERWSLENPQYLEMARRAFQSHIRAYATHIAAERSMFNIKELHLGHLAKAFALRDRPSKINVPGLRQGKEETKKDFKAERRPAAGQKRKADGADMGDSKSSSSHDTATSAQKMRAKMKEHMAGASEFNLA.

The disordered stretch occupies residues 28–128 (TWRDRLSARK…GPVEEAKPTN (101 aa)). Over residues 38–47 (IAQHRSKGPR) the composition is skewed to basic residues. Polar residues-rich tracts occupy residues 61–71 (NPNQIEVSATR) and 88–104 (SHAQ…SLFT). Positions 107-125 (PEPKNVEEVKEEGPVEEAK) are enriched in basic and acidic residues. The short motif at 136–165 (DTFTNLGLSPSLAAHLLTKLELKAPTAIQK) is the Q motif element. The region spanning 169–368 (SQLLKEDGDA…EISLKDAVHI (200 aa)) is the Helicase ATP-binding domain. Residue 182–189 (AETGSGKT) coordinates ATP. A DEAD box motif is present at residues 304–307 (DEGD). Positions 395–600 (QLKQSYAVVA…LTRVDANDIL (206 aa)) constitute a Helicase C-terminal domain. Disordered regions lie at residues 452–481 (QTDD…ATAF) and 685–755 (INVP…FNLA). Residues 454 to 463 (DDADASDEEK) show a composition bias toward acidic residues. Positions 692 to 717 (QGKEETKKDFKAERRPAAGQKRKADG) are enriched in basic and acidic residues. Positions 718 to 735 (ADMGDSKSSSSHDTATSA) are enriched in low complexity.

It belongs to the DEAD box helicase family. DDX31/DBP7 subfamily.

It localises to the nucleus. The protein localises to the nucleolus. It catalyses the reaction ATP + H2O = ADP + phosphate + H(+). Its function is as follows. ATP-binding RNA helicase involved in the biogenesis of 60S ribosomal subunits and is required for the normal formation of 25S and 5.8S rRNAs. The chain is ATP-dependent RNA helicase dbp7 (dbp7) from Aspergillus clavatus (strain ATCC 1007 / CBS 513.65 / DSM 816 / NCTC 3887 / NRRL 1 / QM 1276 / 107).